The sequence spans 635 residues: DNA mismatch repair protein MutL (635 aa).

This sequence belongs to the DNA mismatch repair MutL/HexB family.

In terms of biological role, this protein is involved in the repair of mismatches in DNA. It is required for dam-dependent methyl-directed DNA mismatch repair. May act as a 'molecular matchmaker', a protein that promotes the formation of a stable complex between two or more DNA-binding proteins in an ATP-dependent manner without itself being part of a final effector complex. The chain is DNA mismatch repair protein MutL from Yersinia pestis bv. Antiqua (strain Angola).